A 371-amino-acid chain; its full sequence is Phosphatase IMPL1, chloroplastic (371 aa).

The transit peptide at 1–60 (MGRSLIFSGNMSLRISHLPRSSLPLQNPISGRTVNRTFRYRCTRILSNSFKSTTRLQTKA) directs the protein to the chloroplast. An N-acetylvaline modification is found at Val-61. Mg(2+) contacts are provided by Glu-148, Asp-165, Leu-167, and Asp-168. Glu-148 lines the substrate pocket. Substrate contacts are provided by residues 167–170 (LDGT), 273–275 (GAA), Glu-292, and Asp-299. Asp-299 is a binding site for Mg(2+).

This sequence belongs to the inositol monophosphatase superfamily. Mg(2+) serves as cofactor. In terms of tissue distribution, ubiquitous. Expressed in pistil and seed endosperm.

Its subcellular location is the plastid. The protein resides in the chloroplast stroma. It catalyses the reaction a myo-inositol phosphate + H2O = myo-inositol + phosphate. The protein operates within polyol metabolism; myo-inositol biosynthesis; myo-inositol from D-glucose 6-phosphate: step 2/2. In terms of biological role, phosphatase acting preferentially on D-myoinositol 1-phosphate (D-Ins 1-P). This is Phosphatase IMPL1, chloroplastic (IMPL1) from Arabidopsis thaliana (Mouse-ear cress).